The following is a 458-amino-acid chain: MRVVVVVTGLVVVVVATALSLPDHDVKSASSPLSSSSVYQGSSGDDCDEGLPPPDRPFYVVWNHPDTCKRNRIPLHLDHYGFIFNKNRLFLGEEIQTLYNTGLWPNISETGEFFNGGLPQLFTHHDYSETVEILGRYRTENFTGLGILDFEEWRAIYDTNFGIMRKYQDESIKLAKQRYPSYNKKELTMVAEQEWDQAAREIMSTKLAIGQALMPGGHWGYYGYPRTWGSKRNTQLRNNRIDWLWRQSTGLYPSIYIKDPNMTESAIAEFVSGNVEEAVRVQDEFSPPNTPIYPYAMLQSGDHIFFQVDHLKISLGLPAKMGTSGVILWASSNRYKNATRQCSRMRVHIDNVLGPYVENLTQVMADCSTTLCGGHGRCVHNSHDVLLGETDSQRLSGLCTPRHSRFRDYHCRCYSDWEGACCQTVRPSRCHKQQQGNVHEGGDLQEGHVVNVVNPLIG.

A signal peptide spans Met1–Ala18. Positions His24–Cys47 are disordered. Over residues Ser28–Ser43 the composition is skewed to low complexity. A disulfide bridge links Cys68 with Cys342. N-linked (GlcNAc...) asparagine glycosylation is found at Asn106 and Asn141. Glu151 acts as the Proton donor in catalysis. Asn261, Asn337, and Asn359 each carry an N-linked (GlcNAc...) asparagine glycan. The EGF-like domain maps to Val363 to Gln434. 3 disulfide bridges follow: Cys367/Cys378, Cys372/Cys411, and Cys413/Cys422.

The protein belongs to the glycosyl hydrolase 56 family. In terms of tissue distribution, expressed by the venom duct.

It localises to the secreted. The enzyme catalyses Random hydrolysis of (1-&gt;4)-linkages between N-acetyl-beta-D-glucosamine and D-glucuronate residues in hyaluronate.. In terms of biological role, hyaluronidase catalyzes the hydrolysis of hyaluronic acid (HA), an anionic, nonsulfated glycosaminoglycan distributed widely throughout connective, epithelial, and neural tissues. In venom, they are known to enhance diffusion of the venom by degrading the extracellular matrix. The protein is Hyaluronidase conohyal-P1 of Conus purpurascens (Purple cone).